The sequence spans 247 residues: Protein LIFEGUARD 4 (247 aa).

7 helical membrane passes run 42 to 62 (VYSIIAFQLLATIAVASTVVF), 75 to 95 (AGLALWIVLIITPLIVMCPLY), 105 to 125 (YLLLGIFTVALAFAVGLTCAF), 130 to 150 (VILEAAILTTVVVLSLTVYTF), 165 to 185 (FLFGALIVLMVFALIQIFFPL), 188 to 208 (ISVMIYGCLAAIIFCGYIVYD), and 222 to 242 (IWAAVSLYLDIINLFLALLTI).

This sequence belongs to the BI1 family.

The protein resides in the membrane. This Arabidopsis thaliana (Mouse-ear cress) protein is Protein LIFEGUARD 4.